Here is a 493-residue protein sequence, read N- to C-terminus: Protein LTV1 homolog (493 aa).

3 disordered regions span residues 42-63 (AAARQQKPKDPEPPTDPAQRQE), 97-119 (PNQARKQKVQDSEKPGPAPKLML), and 170-207 (IQAMAEGDSDDEEWDDEDGEEQSDMDFDSDDLNEDENE). Over residues 176 to 207 (GDSDDEEWDDEDGEEQSDMDFDSDDLNEDENE) the composition is skewed to acidic residues. Residues serine 345, serine 369, serine 370, serine 424, and serine 427 each carry the phosphoserine modification. The disordered stretch occupies residues 359 to 387 (VIDEPRRSRRSSASTNPAPIQIDPKTGLP). The stretch at 437–468 (KDETHEEKKERKRLLKDYRNERRIEKKANTEA) forms a coiled coil. The segment covering 465-474 (NTEAFKEEKK) has biased composition (basic and acidic residues). The tract at residues 465–493 (NTEAFKEEKKRQTHVKINQRTNQQGASIV) is disordered. Residues 479-493 (VKINQRTNQQGASIV) are compositionally biased toward polar residues.

It belongs to the LTV1 family. Interacts with RpS3; the interaction is RNA-independent. Associates with free 40S ribosome subunits.

It is found in the cytoplasm. Necessary for the biogenesis of 40S ribosome subunits by regulating pre-rRNA processing. Non-ribosomal factor required for efficient nuclear export of the ribosomal 40S subunit. Necessary for endoreplication driven by Myc. The sequence is that of Protein LTV1 homolog from Drosophila melanogaster (Fruit fly).